A 126-amino-acid chain; its full sequence is S-adenosylmethionine decarboxylase proenzyme (126 aa).

The Schiff-base intermediate with substrate; via pyruvic acid role is filled by Ser-63. Ser-63 is modified (pyruvic acid (Ser); by autocatalysis). The active-site Proton acceptor; for processing activity is His-68. The active-site Proton donor; for catalytic activity is Cys-83.

It belongs to the prokaryotic AdoMetDC family. Type 1 subfamily. Heterotetramer of two alpha and two beta chains arranged as a dimer of alpha/beta heterodimers. It depends on pyruvate as a cofactor. Is synthesized initially as an inactive proenzyme. Formation of the active enzyme involves a self-maturation process in which the active site pyruvoyl group is generated from an internal serine residue via an autocatalytic post-translational modification. Two non-identical subunits are generated from the proenzyme in this reaction, and the pyruvate is formed at the N-terminus of the alpha chain, which is derived from the carboxyl end of the proenzyme. The post-translation cleavage follows an unusual pathway, termed non-hydrolytic serinolysis, in which the side chain hydroxyl group of the serine supplies its oxygen atom to form the C-terminus of the beta chain, while the remainder of the serine residue undergoes an oxidative deamination to produce ammonia and the pyruvoyl group blocking the N-terminus of the alpha chain.

It carries out the reaction S-adenosyl-L-methionine + H(+) = S-adenosyl 3-(methylsulfanyl)propylamine + CO2. The protein operates within amine and polyamine biosynthesis; S-adenosylmethioninamine biosynthesis; S-adenosylmethioninamine from S-adenosyl-L-methionine: step 1/1. Its function is as follows. Catalyzes the decarboxylation of S-adenosylmethionine to S-adenosylmethioninamine (dcAdoMet), the propylamine donor required for the synthesis of the polyamines spermine and spermidine from the diamine putrescine. The sequence is that of S-adenosylmethionine decarboxylase proenzyme from Bacillus velezensis (strain DSM 23117 / BGSC 10A6 / LMG 26770 / FZB42) (Bacillus amyloliquefaciens subsp. plantarum).